The following is a 292-amino-acid chain: 4-hydroxy-tetrahydrodipicolinate synthase (292 aa).

Thr-45 contacts pyruvate. The Proton donor/acceptor role is filled by Tyr-133. Lys-162 acts as the Schiff-base intermediate with substrate in catalysis. Ile-204 is a binding site for pyruvate.

The protein belongs to the DapA family. In terms of assembly, homotetramer; dimer of dimers.

It localises to the cytoplasm. The catalysed reaction is L-aspartate 4-semialdehyde + pyruvate = (2S,4S)-4-hydroxy-2,3,4,5-tetrahydrodipicolinate + H2O + H(+). Its pathway is amino-acid biosynthesis; L-lysine biosynthesis via DAP pathway; (S)-tetrahydrodipicolinate from L-aspartate: step 3/4. Functionally, catalyzes the condensation of (S)-aspartate-beta-semialdehyde [(S)-ASA] and pyruvate to 4-hydroxy-tetrahydrodipicolinate (HTPA). This Nitratidesulfovibrio vulgaris (strain DSM 19637 / Miyazaki F) (Desulfovibrio vulgaris) protein is 4-hydroxy-tetrahydrodipicolinate synthase.